The chain runs to 142 residues: Large ribosomal subunit protein uL16 (142 aa).

This sequence belongs to the universal ribosomal protein uL16 family. Part of the 50S ribosomal subunit.

Its function is as follows. Binds 23S rRNA and is also seen to make contacts with the A and possibly P site tRNAs. The chain is Large ribosomal subunit protein uL16 from Thermotoga maritima (strain ATCC 43589 / DSM 3109 / JCM 10099 / NBRC 100826 / MSB8).